A 399-amino-acid polypeptide reads, in one-letter code: GDP-D-glucose phosphorylase 1 (399 aa).

Catalysis depends on H237, which acts as the Tele-GMP-histidine intermediate.

It belongs to the GDPGP1 family.

Its subcellular location is the cytoplasm. It carries out the reaction GDP-alpha-D-glucose + phosphate = alpha-D-glucose 1-phosphate + GDP + H(+). Functionally, specific and highly efficient GDP-D-glucose phosphorylase regulating the levels of GDP-D-glucose in cells. The protein is GDP-D-glucose phosphorylase 1 (gdpgp1) of Xenopus laevis (African clawed frog).